Consider the following 106-residue polypeptide: Transcriptional and immune response regulator (106 aa).

In terms of assembly, monomer. Interacts with NOTCH2 (via ANK repeats), the interaction inhibits the nuclear translocation of NOTCH2 N2ICD. Interacts (C-terminus) with CBY1 (C-terminus), TCIM competes with CTNNB1 for the interaction with CBY1.

Its subcellular location is the cytoplasm. It is found in the nucleus. The protein resides in the nucleolus. It localises to the nucleus speckle. Functionally, seems to be involved in the regulation of cell growth an differentiation, may play different and opposite roles depending on the tissue or cell type. May enhance the WNT-CTNNB1 pathway by relieving antagonistic activity of CBY1. Enhances the proliferation of follicular dendritic cells. Plays a role in the mitogen-activated MAPK2/3 signaling pathway, positively regulates G1-to-S-phase transition of the cell cycle. In endothelial cells, enhances key inflammatory mediators and inflammatory response through the modulation of NF-kappaB transcriptional regulatory activity. Involved in the regulation of heat shock response, seems to play a positive feedback with HSF1 to modulate heat-shock downstream gene expression. Plays a role in the regulation of hematopoiesis even if the mechanisms are unknown. In cancers such as thyroid or lung cancer, it has been described as promoter of cell proliferation, G1-to-S-phase transition and inhibitor of apoptosis. However, it negatively regulates self-renewal of liver cancer cells via suppresion of NOTCH2 signaling. This chain is Transcriptional and immune response regulator (TCIM), found in Bos taurus (Bovine).